The chain runs to 156 residues: Small ribosomal subunit protein uS7 (156 aa).

It belongs to the universal ribosomal protein uS7 family. In terms of assembly, part of the 30S ribosomal subunit. Contacts proteins S9 and S11.

In terms of biological role, one of the primary rRNA binding proteins, it binds directly to 16S rRNA where it nucleates assembly of the head domain of the 30S subunit. Is located at the subunit interface close to the decoding center, probably blocks exit of the E-site tRNA. In Streptococcus pneumoniae (strain Taiwan19F-14), this protein is Small ribosomal subunit protein uS7.